A 232-amino-acid chain; its full sequence is Large ribosomal subunit protein uL1 (232 aa).

It belongs to the universal ribosomal protein uL1 family. As to quaternary structure, part of the 50S ribosomal subunit.

In terms of biological role, binds directly to 23S rRNA. The L1 stalk is quite mobile in the ribosome, and is involved in E site tRNA release. Functionally, protein L1 is also a translational repressor protein, it controls the translation of the L11 operon by binding to its mRNA. The chain is Large ribosomal subunit protein uL1 from Dichelobacter nodosus (strain VCS1703A).